A 1070-amino-acid polypeptide reads, in one-letter code: Phosphatidylinositol 4,5-bisphosphate 3-kinase catalytic subunit beta isoform (1070 aa).

In terms of domain architecture, PI3K-ABD spans 26–115 (SDGSISVDFL…LPVLKLVTRS (90 aa)). The region spanning 194 to 285 (GGKLVVAVHF…RTLPHFILVE (92 aa)) is the PI3K-RBD domain. Position 324 is a phosphoserine (Ser-324). The C2 PI3K-type domain maps to 327–496 (WGNNNPFQIV…NATALHIKFP (170 aa)). The Nuclear localization signal (NLS) motif lies at 410–418 (KVKTKKSTK). Residues 524 to 701 (ANVSSRGGKK…GVILEAYCRG (178 aa)) form the PIK helical domain. One can recognise a PI3K/PI4K catalytic domain in the interval 772-1053 (YVEKCRYMDS…KFDEALRESW (282 aa)). The tract at residues 778–784 (YMDSKMK) is G-loop. A catalytic loop region spans residues 916–924 (GIGDRHSDN). The segment at 935–961 (HIDFGHILGNFKSKFGIKRERVPFILT) is activation loop. Phosphoserine; by autocatalysis is present on Ser-1070.

It belongs to the PI3/PI4-kinase family. In terms of assembly, heterodimer of a catalytic subunit PIK3CB and a p85 regulatory subunit (PIK3R1, PIK3R2 or PIK3R3). Interaction with PIK3R2 is required for nuclear localization and nuclear export. Part of a complex with PIK3R1 and PTEN. Binding to PTEN may antagonize the lipid kinase activity under normal growth conditions. Part of a complex involved in autophagosome formation composed of PIK3C3 and PIK3R4. Interacts with BECN1, ATG14 and RAB5A. In terms of processing, autophosphorylation at Ser-1070 negatively regulates the phosphatidylinositol-4,5-bisphosphate 3-kinase activity.

It localises to the cytoplasm. The protein resides in the nucleus. It carries out the reaction a 1,2-diacyl-sn-glycero-3-phospho-(1D-myo-inositol-4,5-bisphosphate) + ATP = a 1,2-diacyl-sn-glycero-3-phospho-(1D-myo-inositol-3,4,5-trisphosphate) + ADP + H(+). The catalysed reaction is 1-octadecanoyl-2-(5Z,8Z,11Z,14Z)-eicosatetraenoyl-sn-glycero-3-phospho-1D-myo-inositol 4,5-bisphosphate + ATP = 1-octadecanoyl-2-(5Z,8Z,11Z,14Z-eicosatetraenoyl)-sn-glycero-3-phospho-(1D-myo-inositol 3,4,5-triphosphate) + ADP + H(+). It catalyses the reaction L-seryl-[protein] + ATP = O-phospho-L-seryl-[protein] + ADP + H(+). Its pathway is phospholipid metabolism; phosphatidylinositol phosphate biosynthesis. In terms of biological role, phosphoinositide-3-kinase (PI3K) phosphorylates phosphatidylinositol (PI) derivatives at position 3 of the inositol ring to produce 3-phosphoinositides. Uses ATP and PtdIns(4,5)P2 (phosphatidylinositol 4,5-bisphosphate) to generate phosphatidylinositol 3,4,5-trisphosphate (PIP3). PIP3 plays a key role by recruiting PH domain-containing proteins to the membrane, including AKT1 and PDPK1, activating signaling cascades involved in cell growth, survival, proliferation, motility and morphology. Involved in the activation of AKT1 upon stimulation by G-protein coupled receptors (GPCRs) ligands such as CXCL12, sphingosine 1-phosphate, and lysophosphatidic acid. May also act downstream receptor tyrosine kinases. Required in different signaling pathways for stable platelet adhesion and aggregation. Plays a role in platelet activation signaling triggered by GPCRs, alpha-IIb/beta-3 integrins (ITGA2B/ ITGB3) and ITAM (immunoreceptor tyrosine-based activation motif)-bearing receptors such as GP6. Regulates the strength of adhesion of ITGA2B/ ITGB3 activated receptors necessary for the cellular transmission of contractile forces. Required for platelet aggregation induced by F2 (thrombin) and thromboxane A2 (TXA2). Has a role in cell survival. May have a role in cell migration. Involved in the early stage of autophagosome formation. Modulates the intracellular level of PtdIns3P (phosphatidylinositol 3-phosphate) and activates PIK3C3 kinase activity. May act as a scaffold, independently of its lipid kinase activity to positively regulate autophagy. May have a role in insulin signaling as scaffolding protein in which the lipid kinase activity is not required. May have a kinase-independent function in regulating cell proliferation and in clathrin-mediated endocytosis. Mediator of oncogenic signal in cell lines lacking PTEN. The lipid kinase activity is necessary for its role in oncogenic transformation. Required for the growth of ERBB2 and RAS driven tumors. Also has a protein kinase activity showing autophosphorylation. In Rattus norvegicus (Rat), this protein is Phosphatidylinositol 4,5-bisphosphate 3-kinase catalytic subunit beta isoform (Pik3cb).